A 679-amino-acid chain; its full sequence is Patatin-like phospholipase 1 (679 aa).

Disordered regions lie at residues 19–45 (FSDD…NAEN) and 155–194 (GEYE…NYNS). 2 stretches are compositionally biased toward polar residues: residues 35 to 45 (YSGSETQNAEN) and 162 to 176 (TSSY…NTVG). The span at 177-188 (SEKEETENKNEE) shows a compositional bias: basic and acidic residues. The PNPLA domain maps to 338–544 (LSLDGGGILT…KASNPALIAL (207 aa)). The GXSXG signature appears at 381–385 (GTSAG). The Nucleophile role is filled by S383. The active-site Proton acceptor is the D531. The DGA/G signature appears at 531–533 (DGA).

The protein belongs to the patatin family.

The protein localises to the cytoplasm. The catalysed reaction is a 1,2-diacyl-sn-glycero-3-phosphocholine + H2O = a 1-acyl-sn-glycero-3-phosphocholine + a fatty acid + H(+). It carries out the reaction 1,2-dihexadecanoyl-sn-glycero-3-phosphocholine + H2O = 1-hexadecanoyl-sn-glycero-3-phosphocholine + hexadecanoate + H(+). Functionally, hydrolyzes the ester bond of the fatty acyl group attached at the sn-2 position of phospholipids such as phosphatidylcholine. Involved in gametogenesis; however, it is not clear whether it is involved in gametocytes development in host erythrocytes or in gametocyte activation in the mosquito midgut. Involved in gametocyte development in host erythrocytes; however, not involved in gametocytes activation including male gamete exflagellation. Involved in the rounding up of gametocytes following activation in the mosquito midgut; however, not required for gametocyte development in host erythrocytes. Required for exflagellation of activated male gametocytes. Involved in gametocytes egress from host erythrocytes by promoting the relocalization of perforin-like protein PLP2-containing vesicles to the periphery of gametocytes; PLP2 secretion is required for permeabilization of the erythrocyte membrane and thus, promotes gametocyte egress. Dispensable for asexual blood stage development. This is Patatin-like phospholipase 1 from Plasmodium falciparum (isolate NF54).